Consider the following 210-residue polypeptide: Ribosomal RNA large subunit methyltransferase E (210 aa).

Positions 67, 69, 87, 103, and 128 each coordinate S-adenosyl-L-methionine. Lys-168 functions as the Proton acceptor in the catalytic mechanism.

This sequence belongs to the class I-like SAM-binding methyltransferase superfamily. RNA methyltransferase RlmE family.

The protein localises to the cytoplasm. The catalysed reaction is uridine(2552) in 23S rRNA + S-adenosyl-L-methionine = 2'-O-methyluridine(2552) in 23S rRNA + S-adenosyl-L-homocysteine + H(+). Its function is as follows. Specifically methylates the uridine in position 2552 of 23S rRNA at the 2'-O position of the ribose in the fully assembled 50S ribosomal subunit. This chain is Ribosomal RNA large subunit methyltransferase E, found in Psychrobacter cryohalolentis (strain ATCC BAA-1226 / DSM 17306 / VKM B-2378 / K5).